A 599-amino-acid chain; its full sequence is Elongation factor 4 (599 aa).

One can recognise a tr-type G domain in the interval 5–187 (SHIRNFSIIA…RLVTAIPAPE (183 aa)). Residues 17–22 (DHGKST) and 134–137 (NKMD) contribute to the GTP site.

The protein belongs to the TRAFAC class translation factor GTPase superfamily. Classic translation factor GTPase family. LepA subfamily.

It localises to the cell inner membrane. It carries out the reaction GTP + H2O = GDP + phosphate + H(+). Functionally, required for accurate and efficient protein synthesis under certain stress conditions. May act as a fidelity factor of the translation reaction, by catalyzing a one-codon backward translocation of tRNAs on improperly translocated ribosomes. Back-translocation proceeds from a post-translocation (POST) complex to a pre-translocation (PRE) complex, thus giving elongation factor G a second chance to translocate the tRNAs correctly. Binds to ribosomes in a GTP-dependent manner. This chain is Elongation factor 4, found in Pseudomonas aeruginosa (strain LESB58).